The chain runs to 227 residues: Nucleoside triphosphate pyrophosphatase (227 aa).

The active-site Proton acceptor is the aspartate 77.

It belongs to the Maf family. The cofactor is a divalent metal cation.

It localises to the cytoplasm. It carries out the reaction a ribonucleoside 5'-triphosphate + H2O = a ribonucleoside 5'-phosphate + diphosphate + H(+). It catalyses the reaction a 2'-deoxyribonucleoside 5'-triphosphate + H2O = a 2'-deoxyribonucleoside 5'-phosphate + diphosphate + H(+). In terms of biological role, nucleoside triphosphate pyrophosphatase. May have a dual role in cell division arrest and in preventing the incorporation of modified nucleotides into cellular nucleic acids. The sequence is that of Nucleoside triphosphate pyrophosphatase from Rickettsia typhi (strain ATCC VR-144 / Wilmington).